Reading from the N-terminus, the 555-residue chain is CTP synthase (555 aa).

Positions 1–272 (MQPTSTTTKH…DAYVVRKLDL (272 aa)) are amidoligase domain. Position 19 (Ser-19) interacts with CTP. Ser-19 is a binding site for UTP. ATP-binding positions include 20–25 (SLGKGL) and Asp-77. Positions 77 and 146 each coordinate Mg(2+). CTP-binding positions include 153-155 (DIE), 193-198 (KTKPTQ), and Lys-229. UTP contacts are provided by residues 193–198 (KTKPTQ) and Lys-229. The region spanning 297-548 (TVALVGKYID…VKAAVARQVA (252 aa)) is the Glutamine amidotransferase type-1 domain. Gly-360 contacts L-glutamine. Residue Cys-387 is the Nucleophile; for glutamine hydrolysis of the active site. L-glutamine contacts are provided by residues 388–391 (LGLQ), Glu-411, and Arg-473. Residues His-521 and Glu-523 contribute to the active site.

It belongs to the CTP synthase family. Homotetramer.

It catalyses the reaction UTP + L-glutamine + ATP + H2O = CTP + L-glutamate + ADP + phosphate + 2 H(+). It carries out the reaction L-glutamine + H2O = L-glutamate + NH4(+). The catalysed reaction is UTP + NH4(+) + ATP = CTP + ADP + phosphate + 2 H(+). It functions in the pathway pyrimidine metabolism; CTP biosynthesis via de novo pathway; CTP from UDP: step 2/2. Its activity is regulated as follows. Allosterically activated by GTP, when glutamine is the substrate; GTP has no effect on the reaction when ammonia is the substrate. The allosteric effector GTP functions by stabilizing the protein conformation that binds the tetrahedral intermediate(s) formed during glutamine hydrolysis. Inhibited by the product CTP, via allosteric rather than competitive inhibition. In terms of biological role, catalyzes the ATP-dependent amination of UTP to CTP with either L-glutamine or ammonia as the source of nitrogen. Regulates intracellular CTP levels through interactions with the four ribonucleotide triphosphates. The sequence is that of CTP synthase from Streptomyces griseus subsp. griseus (strain JCM 4626 / CBS 651.72 / NBRC 13350 / KCC S-0626 / ISP 5235).